The chain runs to 79 residues: MSLEVFEKLEAKVQQAIDTITLLQMEIEELKEKNNSLTQEVQSAQHQREELERENNSLKEQQSGWQERLQALLGRMEEV.

Residues 3–79 (LEVFEKLEAK…QALLGRMEEV (77 aa)) adopt a coiled-coil conformation. Residues 36-45 (SLTQEVQSAQ) are compositionally biased toward polar residues. Residues 36–63 (SLTQEVQSAQHQREELERENNSLKEQQS) form a disordered region. Positions 46–57 (HQREELERENNS) are enriched in basic and acidic residues.

Belongs to the ZapB family. Homodimer. The ends of the coiled-coil dimer bind to each other, forming polymers. Interacts with FtsZ.

It localises to the cytoplasm. In terms of biological role, non-essential, abundant cell division factor that is required for proper Z-ring formation. It is recruited early to the divisome by direct interaction with FtsZ, stimulating Z-ring assembly and thereby promoting cell division earlier in the cell cycle. Its recruitment to the Z-ring requires functional FtsA or ZipA. In Salmonella agona (strain SL483), this protein is Cell division protein ZapB.